The sequence spans 330 residues: L-tryptophan isonitrile synthase AmbI2 (330 aa).

It belongs to the isocyanide synthase family.

The enzyme catalyses D-ribulose 5-phosphate + L-tryptophan = (2S)-3-(1H-indol-3-yl)-2-isocyanopropanoate + hydroxyacetone + formaldehyde + phosphate + H2O + H(+). Functionally, involved in the biosynthesis of ambiguines, a family of hapalindole-type alkaloids. Responsible for the synthesis of the isonitrile group on tryptophan using ribulose 5-phosphate as the source of the carbon atom. The chain is L-tryptophan isonitrile synthase AmbI2 from Fischerella ambigua (strain UTEX 1903).